Here is a 95-residue protein sequence, read N- to C-terminus: Progonadoliberin-1 (95 aa).

The signal sequence occupies residues M1–C23. Q24 is modified (pyrrolidone carboxylic acid). G33 carries the glycine amide modification.

Belongs to the GnRH family.

The protein resides in the secreted. Its function is as follows. Stimulates the secretion of gonadotropins. The sequence is that of Progonadoliberin-1 (gnrh1) from Pagrus major (Red sea bream).